A 478-amino-acid polypeptide reads, in one-letter code: F-box/kelch-repeat protein At1g51550 (478 aa).

Residues methionine 1 to proline 20 are disordered. The span at serine 9 to proline 20 shows a compositional bias: low complexity. An F-box domain is found at serine 18–leucine 64. Kelch repeat units lie at residues leucine 135–glutamate 187 and lysine 246–glutamate 299.

The sequence is that of F-box/kelch-repeat protein At1g51550 from Arabidopsis thaliana (Mouse-ear cress).